Consider the following 203-residue polypeptide: VPS4-associated protein 1 (203 aa).

Positions 99-109 (EKETNNSKDPD) are enriched in basic and acidic residues. Disordered stretches follow at residues 99–125 (EKET…AKND) and 171–193 (QVNR…EELL). The segment covering 110-120 (PTTTDSTDTSP) has biased composition (low complexity). The stretch at 121–157 (QAKNDAEILSETKKQYSKILDKVTELQRKNRKYELAK) forms a coiled coil. Positions 171–182 (QVNRERYLKEQE) are enriched in basic and acidic residues.

In terms of assembly, interacts with VPS4.

Its subcellular location is the cytoplasm. It is found in the endosome. In terms of biological role, VPS4-associated protein involved in trafficking to the vacuole. This Saccharomyces cerevisiae (strain ATCC 204508 / S288c) (Baker's yeast) protein is VPS4-associated protein 1 (VFA1).